Here is a 252-residue protein sequence, read N- to C-terminus: Ubiquinone biosynthesis O-methyltransferase (252 aa).

S-adenosyl-L-methionine is bound by residues R51, G70, D91, and M136.

The protein belongs to the methyltransferase superfamily. UbiG/COQ3 family.

The catalysed reaction is a 3-demethylubiquinol + S-adenosyl-L-methionine = a ubiquinol + S-adenosyl-L-homocysteine + H(+). It catalyses the reaction a 3-(all-trans-polyprenyl)benzene-1,2-diol + S-adenosyl-L-methionine = a 2-methoxy-6-(all-trans-polyprenyl)phenol + S-adenosyl-L-homocysteine + H(+). It participates in cofactor biosynthesis; ubiquinone biosynthesis. O-methyltransferase that catalyzes the 2 O-methylation steps in the ubiquinone biosynthetic pathway. This chain is Ubiquinone biosynthesis O-methyltransferase, found in Albidiferax ferrireducens (strain ATCC BAA-621 / DSM 15236 / T118) (Rhodoferax ferrireducens).